The following is a 283-amino-acid chain: Nucleoid occlusion protein (283 aa).

A DNA-binding region (H-T-H motif) is located at residues glutamate 148–leucine 167.

Belongs to the ParB family.

Its subcellular location is the cytoplasm. The protein resides in the nucleoid. Its function is as follows. Effects nucleoid occlusion by binding relatively nonspecifically to DNA and preventing the assembly of the division machinery in the vicinity of the nucleoid, especially under conditions that disturb the cell cycle. It helps to coordinate cell division and chromosome segregation by preventing the formation of the Z ring through the nucleoid, which would cause chromosome breakage. This is Nucleoid occlusion protein (noc) from Bacillus subtilis (strain 168).